Here is a 402-residue protein sequence, read N- to C-terminus: Flavohemoprotein (402 aa).

The Globin domain maps to 1-138 (MLSPEVRALV…LADLLIGRER (138 aa)). H85 lines the heme b pocket. Residues Y95 and E137 each act as charge relay system in the active site. Residues 149–402 (GGWTGWRAFK…AEVFGTGGVA (254 aa)) form a reductase region. An FAD-binding FR-type domain is found at 152 to 261 (TGWRAFKVVR…SPPQGDFTLD (110 aa)). Residues Y190 and 206–209 (RQYS) contribute to the FAD site. 274-279 (GVGLTP) contacts NADP(+). 395-398 (VFGT) provides a ligand contact to FAD.

Belongs to the globin family. Two-domain flavohemoproteins subfamily. It in the C-terminal section; belongs to the flavoprotein pyridine nucleotide cytochrome reductase family. The cofactor is heme b. FAD serves as cofactor.

It carries out the reaction 2 nitric oxide + NADPH + 2 O2 = 2 nitrate + NADP(+) + H(+). It catalyses the reaction 2 nitric oxide + NADH + 2 O2 = 2 nitrate + NAD(+) + H(+). Is involved in NO detoxification in an aerobic process, termed nitric oxide dioxygenase (NOD) reaction that utilizes O(2) and NAD(P)H to convert NO to nitrate, which protects the bacterium from various noxious nitrogen compounds. Therefore, plays a central role in the inducible response to nitrosative stress. In Bordetella pertussis (strain Tohama I / ATCC BAA-589 / NCTC 13251), this protein is Flavohemoprotein.